Consider the following 175-residue polypeptide: NADH-ubiquinone oxidoreductase chain 6 (175 aa).

The next 5 helical transmembrane spans lie at 1–21 (MMTY…VGFS), 25–45 (SPIY…GIVM), 47–67 (FGGS…MLVV), 88–108 (VVMG…LCVL), and 149–169 (YGVW…IVVL).

The protein belongs to the complex I subunit 6 family.

Its subcellular location is the mitochondrion membrane. The catalysed reaction is a ubiquinone + NADH + 5 H(+)(in) = a ubiquinol + NAD(+) + 4 H(+)(out). In terms of biological role, core subunit of the mitochondrial membrane respiratory chain NADH dehydrogenase (Complex I) that is believed to belong to the minimal assembly required for catalysis. Complex I functions in the transfer of electrons from NADH to the respiratory chain. The immediate electron acceptor for the enzyme is believed to be ubiquinone. This is NADH-ubiquinone oxidoreductase chain 6 (MT-ND6) from Rhinolophus monoceros (Formosan lesser horseshoe bat).